Reading from the N-terminus, the 93-residue chain is Large ribosomal subunit protein bL31B (93 aa).

The protein belongs to the bacterial ribosomal protein bL31 family. Type B subfamily. As to quaternary structure, part of the 50S ribosomal subunit.

The chain is Large ribosomal subunit protein bL31B from Psychrobacter cryohalolentis (strain ATCC BAA-1226 / DSM 17306 / VKM B-2378 / K5).